Consider the following 423-residue polypeptide: NDP-N-acetyl-D-galactosaminuronic acid dehydrogenase (423 aa).

NAD(+) is bound at residue 11–28 (TISVVGLGYIGLPTATVL). The active-site Proton donor/acceptor is Lys-218. Catalysis depends on Cys-272, which acts as the Nucleophile.

The protein belongs to the UDP-glucose/GDP-mannose dehydrogenase family.

In terms of biological role, probably involved in synthesis of sugar components of EPS I, by converting NDP-N-acetyl-D-galactosamine into NDP-N-acetyl-D-galactosaminuronic acid. This is NDP-N-acetyl-D-galactosaminuronic acid dehydrogenase (epsD) from Ralstonia solanacearum (Pseudomonas solanacearum).